A 749-amino-acid chain; its full sequence is 1,4-alpha-glucan branching enzyme GlgB (749 aa).

The active-site Nucleophile is aspartate 415. Glutamate 468 serves as the catalytic Proton donor.

Belongs to the glycosyl hydrolase 13 family. GlgB subfamily. In terms of assembly, monomer.

It catalyses the reaction Transfers a segment of a (1-&gt;4)-alpha-D-glucan chain to a primary hydroxy group in a similar glucan chain.. It functions in the pathway glycan biosynthesis; glycogen biosynthesis. Its function is as follows. Catalyzes the formation of the alpha-1,6-glucosidic linkages in glycogen by scission of a 1,4-alpha-linked oligosaccharide from growing alpha-1,4-glucan chains and the subsequent attachment of the oligosaccharide to the alpha-1,6 position. This chain is 1,4-alpha-glucan branching enzyme GlgB, found in Nitrosococcus oceani (strain ATCC 19707 / BCRC 17464 / JCM 30415 / NCIMB 11848 / C-107).